Consider the following 187-residue polypeptide: Putative manganese efflux pump MntP (187 aa).

Helical transmembrane passes span 3–23, 39–59, 65–85, 103–123, 124–144, and 166–186; these read WLTI…VALA, LGFH…LLGM, ISAY…GRMV, GMTM…VGLS, IAML…VAGV, and ICGG…HTLL.

Belongs to the MntP (TC 9.B.29) family.

It is found in the cell inner membrane. Functionally, probably functions as a manganese efflux pump. The polypeptide is Putative manganese efflux pump MntP (Geobacter sp. (strain M21)).